We begin with the raw amino-acid sequence, 537 residues long: CTP synthase (537 aa).

The interval 1 to 267 (MTNTKFVFVT…ISVLEERLFG (267 aa)) is amidoligase domain. Ser15 contributes to the CTP binding site. Ser15 is a UTP binding site. ATP is bound at residue 16–21 (SVGKGI). Tyr56 is a binding site for L-glutamine. Asp73 provides a ligand contact to ATP. 2 residues coordinate Mg(2+): Asp73 and Glu141. Residues 148 to 150 (DIE), 188 to 193 (KTKPTQ), and Lys224 each bind CTP. UTP contacts are provided by residues 188 to 193 (KTKPTQ) and Lys224. Positions 297-535 (YVVLPDAYLS…LSEAVAKASP (239 aa)) constitute a Glutamine amidotransferase type-1 domain. Position 355 (Gly355) interacts with L-glutamine. Cys382 serves as the catalytic Nucleophile; for glutamine hydrolysis. L-glutamine contacts are provided by residues 383–386 (LGMQ), Glu406, and Arg463. Residues His508 and Glu510 contribute to the active site.

This sequence belongs to the CTP synthase family. Homotetramer.

The enzyme catalyses UTP + L-glutamine + ATP + H2O = CTP + L-glutamate + ADP + phosphate + 2 H(+). The catalysed reaction is L-glutamine + H2O = L-glutamate + NH4(+). It carries out the reaction UTP + NH4(+) + ATP = CTP + ADP + phosphate + 2 H(+). It functions in the pathway pyrimidine metabolism; CTP biosynthesis via de novo pathway; CTP from UDP: step 2/2. Allosterically activated by GTP, when glutamine is the substrate; GTP has no effect on the reaction when ammonia is the substrate. The allosteric effector GTP functions by stabilizing the protein conformation that binds the tetrahedral intermediate(s) formed during glutamine hydrolysis. Inhibited by the product CTP, via allosteric rather than competitive inhibition. Functionally, catalyzes the ATP-dependent amination of UTP to CTP with either L-glutamine or ammonia as the source of nitrogen. Regulates intracellular CTP levels through interactions with the four ribonucleotide triphosphates. The chain is CTP synthase from Coprothermobacter proteolyticus (strain ATCC 35245 / DSM 5265 / OCM 4 / BT).